Here is a 256-residue protein sequence, read N- to C-terminus: 5-keto-4-deoxy-D-glucarate aldolase (256 aa).

The active-site Proton acceptor is His-50. Gln-151 is a substrate binding site. Glu-153 is a Mg(2+) binding site. Positions 178 and 179 each coordinate substrate. A Mg(2+)-binding site is contributed by Asp-179.

This sequence belongs to the HpcH/HpaI aldolase family. KDGluc aldolase subfamily. In terms of assembly, homohexamer; trimer of dimers. Requires Mg(2+) as cofactor.

It catalyses the reaction 5-dehydro-4-deoxy-D-glucarate = 2-hydroxy-3-oxopropanoate + pyruvate. It carries out the reaction 2-dehydro-3-deoxy-D-glucarate = 2-hydroxy-3-oxopropanoate + pyruvate. It functions in the pathway carbohydrate acid metabolism; galactarate degradation; D-glycerate from galactarate: step 2/3. Functionally, catalyzes the reversible retro-aldol cleavage of both 5-keto-4-deoxy-D-glucarate and 2-keto-3-deoxy-D-glucarate to pyruvate and tartronic semialdehyde. The sequence is that of 5-keto-4-deoxy-D-glucarate aldolase from Salmonella arizonae (strain ATCC BAA-731 / CDC346-86 / RSK2980).